Here is a 173-residue protein sequence, read N- to C-terminus: Large ribosomal subunit protein uL10 (173 aa).

The protein belongs to the universal ribosomal protein uL10 family. As to quaternary structure, part of the ribosomal stalk of the 50S ribosomal subunit. The N-terminus interacts with L11 and the large rRNA to form the base of the stalk. The C-terminus forms an elongated spine to which L12 dimers bind in a sequential fashion forming a multimeric L10(L12)X complex.

Functionally, forms part of the ribosomal stalk, playing a central role in the interaction of the ribosome with GTP-bound translation factors. The protein is Large ribosomal subunit protein uL10 of Thiobacillus denitrificans (strain ATCC 25259 / T1).